Reading from the N-terminus, the 495-residue chain is UDP-glycosyltransferase 73C10 (495 aa).

Catalysis depends on His-24, which acts as the Proton acceptor. His-24 contacts an anthocyanidin. Asp-129 serves as the catalytic Charge relay. 6 residues coordinate UDP-alpha-D-glucose: Gln-358, His-373, Trp-376, Asn-377, Ser-378, and Glu-381. Gly-396 serves as a coordination point for an anthocyanidin. Residues Asp-397 and Gln-398 each coordinate UDP-alpha-D-glucose.

It belongs to the UDP-glycosyltransferase family.

It carries out the reaction oleanolate + UDP-alpha-D-glucose = oleanolate 3-O-beta-D-glucoside + UDP + H(+). Catalyzes the transfer of a glucose (Glc) moiety from UDP-Glc to the C-3 position of the oleanane sapogenins oleanolate and hederagenin, and to the C-28 carboxylic group of the lupane sapogenin betulinate. The monoglucosylated hederagenin 3-O-beta-D-glucoside is a feeding deterrent of the yellow-striped flea beetle (Phyllotreta nemorum). The chain is UDP-glycosyltransferase 73C10 from Barbarea vulgaris (Yellow rocket).